The following is a 359-amino-acid chain: Outer membrane protein P2 (359 aa).

An N-terminal signal peptide occupies residues 1 to 20 (MKKTLAALIVGAFAASAANA).

It belongs to the Gram-negative porin family. Homotrimer.

It localises to the cell outer membrane. In terms of biological role, forms pores that allow passive diffusion of small molecules across the outer membrane. This chain is Outer membrane protein P2 (ompP2), found in Haemophilus influenzae (strain ATCC 51907 / DSM 11121 / KW20 / Rd).